The primary structure comprises 501 residues: Sucrose-6-phosphate hydrolase (501 aa).

Substrate-binding positions include Leu44–Asp47, Gln63, Tyr106–Thr107, Arg167–Asp168, and Glu222. Residue Asp47 is part of the active site.

The protein belongs to the glycosyl hydrolase 32 family.

It catalyses the reaction Hydrolysis of terminal non-reducing beta-D-fructofuranoside residues in beta-D-fructofuranosides.. It functions in the pathway glycan biosynthesis; sucrose metabolism. This is Sucrose-6-phosphate hydrolase (scrB) from Pediococcus pentosaceus.